The following is a 353-amino-acid chain: DNA integrity scanning protein DisA (353 aa).

A DAC domain is found at 6–144; the sequence is DKELMNILKI…GGIKYVLRDS (139 aa). ATP is bound by residues Gly73, Leu91, and 104 to 108; that span reads TRHRT.

Belongs to the DisA family. In terms of assembly, homooctamer. The cofactor is Mg(2+).

The catalysed reaction is 2 ATP = 3',3'-c-di-AMP + 2 diphosphate. Participates in a DNA-damage check-point that is active prior to asymmetric division when DNA is damaged. DisA forms globular foci that rapidly scan along the chromosomes during sporulation, searching for lesions. When a lesion is present, DisA pauses at the lesion site. This triggers a cellular response that culminates in a temporary block in sporulation initiation. Its function is as follows. Also has diadenylate cyclase activity, catalyzing the condensation of 2 ATP molecules into cyclic di-AMP (c-di-AMP). c-di-AMP acts as a signaling molecule that couples DNA integrity with progression of sporulation. The rise in c-di-AMP level generated by DisA while scanning the chromosome, operates as a positive signal that advances sporulation; upon encountering a lesion, the DisA focus arrests at the damaged site and halts c-di-AMP synthesis. In Clostridium botulinum (strain Loch Maree / Type A3), this protein is DNA integrity scanning protein DisA.